The primary structure comprises 1771 residues: Myosin-H heavy chain (1771 aa).

The Myosin N-terminal SH3-like domain maps to 7–57 (CGKEKVWVPNPEKGWINGDLIKEIPGEGWLVRDENGKEIKIEKDELRMQNP). The Myosin motor domain maps to 61 to 840 (EGIDDMTSLS…IIANLELLRS (780 aa)). 154-161 (GESGAGKT) is an ATP binding site. An actin-binding region spans residues 690-712 (LNSLMTTINSTNPHYIRCIKPNT). 3 IQ domains span residues 843–872 (MINS…SSIY), 866–895 (TKHS…ENSA), and 940–969 (RIKK…EAKS). Disordered stretches follow at residues 1070 to 1176 (EKQH…NNVD), 1218 to 1282 (VKKS…PINM), and 1312 to 1343 (LNNG…KHIQ). Residues 1077-1111 (YKNNEVVGNTSFEGSTTTNNGVTSPPKSSPASPIR) are compositionally biased toward polar residues. Low complexity predominate over residues 1112–1139 (NSINSNSDTTISGSSDDSIDNTDSLILS). A compositionally biased stretch (basic and acidic residues) spans 1143-1153 (HKGEDRKRNHE). Positions 1180–1224 (RRQFNELEKEYKELKQMDETHKQYIESLKLQITQLEEKVKKSSSH) form a coiled coil. Residues 1253-1281 (NSSSHHQQQQQQHNISPSNSITSTTSPIN) show a composition bias toward low complexity. A Dilute domain is found at 1427-1695 (TGVLDPIETN…LTSLMDSPKY (269 aa)).

The protein belongs to the TRAFAC class myosin-kinesin ATPase superfamily. Myosin family. Myosin I heavy chain is single-headed. Dimer of a heavy and a light chain. Inability to self-assemble into filaments.

Myosin is a protein that binds to actin and has ATPase activity that is activated by actin. The protein is Myosin-H heavy chain (myoH) of Dictyostelium discoideum (Social amoeba).